The following is a 357-amino-acid chain: Peptide chain release factor 1 (357 aa).

Gln234 bears the N5-methylglutamine mark. Positions 284-304 are disordered; that stretch reads RIEGERSEDRKSKIGTGDRSE.

The protein belongs to the prokaryotic/mitochondrial release factor family. Post-translationally, methylated by PrmC. Methylation increases the termination efficiency of RF1.

It is found in the cytoplasm. In terms of biological role, peptide chain release factor 1 directs the termination of translation in response to the peptide chain termination codons UAG and UAA. This chain is Peptide chain release factor 1, found in Pelagibacter ubique (strain HTCC1062).